The sequence spans 158 residues: Protein Smg homolog (158 aa).

This sequence belongs to the Smg family.

The protein is Protein Smg homolog of Vibrio atlanticus (strain LGP32) (Vibrio splendidus (strain Mel32)).